Here is a 64-residue protein sequence, read N- to C-terminus: uncharacterized protein (64 aa).

The first 26 residues, methionine 1 to glycine 26, serve as a signal peptide directing secretion. The helical transmembrane segment at isoleucine 33–tyrosine 53 threads the bilayer.

It belongs to the IIV-6 010R family.

The protein localises to the host membrane. This is an uncharacterized protein from Aedes vexans (Inland floodwater mosquito).